Reading from the N-terminus, the 473-residue chain is Argininosuccinate lyase (473 aa).

Position 2 is an N-acetylalanine (A2). K7 carries the N6-acetyllysine modification. S27 provides a ligand contact to 2-(N(omega)-L-arginino)succinate. Residue K69 is modified to N6-acetyllysine. 2-(N(omega)-L-arginino)succinate-binding residues include N114 and T159. The active-site Proton acceptor is the H160. The active-site Proton donor is the S281. At K288 the chain carries N6-acetyllysine. 4 residues coordinate 2-(N(omega)-L-arginino)succinate: N289, Y321, Q326, and K329.

Belongs to the lyase 1 family. Argininosuccinate lyase subfamily. In terms of assembly, homotetramer. Forms tissue-specific complexes with ASS1, SLC7A1, HSP90AA1 and nitric oxide synthase NOS1, NOS2 or NOS3; the complex maintenance is independent of ASL catalytic function. Post-translationally, acetylation modifies enzyme activity in response to alterations of extracellular nutrient availability. Acetylation increased with trichostin A (TSA) or with nicotinamide (NAM). Glucose increases acetylation by about a factor of 3 with decreasing enzyme activity. Acetylation on Lys-288 is decreased on the addition of extra amino acids resulting in activation of enzyme activity.

The catalysed reaction is 2-(N(omega)-L-arginino)succinate = fumarate + L-arginine. Its pathway is amino-acid biosynthesis; L-arginine biosynthesis; L-arginine from L-ornithine and carbamoyl phosphate: step 3/3. It participates in nitrogen metabolism; urea cycle; L-arginine and fumarate from (N(omega)-L-arginino)succinate: step 1/1. Enzyme activity is regulated by acetylation. Catalyzes the reversible cleavage of L-argininosuccinate to fumarate and L-arginine, an intermediate step reaction in the urea cycle mostly providing for hepatic nitrogen detoxification into excretable urea as well as de novo L-arginine synthesis in nonhepatic tissues. Essential regulator of intracellular and extracellular L-arginine pools. As part of citrulline-nitric oxide cycle, forms tissue-specific multiprotein complexes with argininosuccinate synthase ASS1, transport protein SLC7A1 and nitric oxide synthase NOS1, NOS2 or NOS3, allowing for cell-autonomous L-arginine synthesis while channeling extracellular L-arginine to nitric oxide synthesis pathway. In Bos taurus (Bovine), this protein is Argininosuccinate lyase (ASL).